The following is a 355-amino-acid chain: Adenine deaminase (355 aa).

Residues His24, His26, and His204 each coordinate Zn(2+). The active-site Proton donor is Glu207. Asp285 provides a ligand contact to Zn(2+). Residue Asp286 coordinates substrate.

The protein belongs to the metallo-dependent hydrolases superfamily. Adenosine and AMP deaminases family. Adenine deaminase type 2 subfamily. Zn(2+) serves as cofactor.

It carries out the reaction adenine + H2O + H(+) = hypoxanthine + NH4(+). Catalyzes the hydrolytic deamination of adenine to hypoxanthine. Plays an important role in the purine salvage pathway and in nitrogen catabolism. This Geotalea uraniireducens (strain Rf4) (Geobacter uraniireducens) protein is Adenine deaminase.